The following is a 426-amino-acid chain: Serine--tRNA ligase (426 aa).

231–233 contacts L-serine; that stretch reads TAE. Residue 262–264 coordinates ATP; sequence RSE. E285 is a binding site for L-serine. 349–352 contributes to the ATP binding site; that stretch reads EISS. S385 serves as a coordination point for L-serine.

This sequence belongs to the class-II aminoacyl-tRNA synthetase family. Type-1 seryl-tRNA synthetase subfamily. In terms of assembly, homodimer. The tRNA molecule binds across the dimer.

The protein resides in the cytoplasm. The catalysed reaction is tRNA(Ser) + L-serine + ATP = L-seryl-tRNA(Ser) + AMP + diphosphate + H(+). It carries out the reaction tRNA(Sec) + L-serine + ATP = L-seryl-tRNA(Sec) + AMP + diphosphate + H(+). Its pathway is aminoacyl-tRNA biosynthesis; selenocysteinyl-tRNA(Sec) biosynthesis; L-seryl-tRNA(Sec) from L-serine and tRNA(Sec): step 1/1. Catalyzes the attachment of serine to tRNA(Ser). Is also able to aminoacylate tRNA(Sec) with serine, to form the misacylated tRNA L-seryl-tRNA(Sec), which will be further converted into selenocysteinyl-tRNA(Sec). The chain is Serine--tRNA ligase from Brevibacillus brevis (strain 47 / JCM 6285 / NBRC 100599).